Consider the following 384-residue polypeptide: 1-deoxy-D-xylulose 5-phosphate reductoisomerase (384 aa).

Residues Thr-10, Gly-11, Ser-12, Ile-13, Gly-36, Asn-38, and Asn-122 each contribute to the NADPH site. Lys-123 serves as a coordination point for 1-deoxy-D-xylulose 5-phosphate. Glu-124 serves as a coordination point for NADPH. Mn(2+) is bound at residue Asp-148. 1-deoxy-D-xylulose 5-phosphate-binding residues include Ser-149, Glu-150, Ser-174, and His-197. Residue Glu-150 coordinates Mn(2+). Gly-203 serves as a coordination point for NADPH. 4 residues coordinate 1-deoxy-D-xylulose 5-phosphate: Ser-210, Asn-215, Lys-216, and Glu-219. Glu-219 lines the Mn(2+) pocket.

The protein belongs to the DXR family. Mg(2+) is required as a cofactor. Mn(2+) serves as cofactor.

The enzyme catalyses 2-C-methyl-D-erythritol 4-phosphate + NADP(+) = 1-deoxy-D-xylulose 5-phosphate + NADPH + H(+). It participates in isoprenoid biosynthesis; isopentenyl diphosphate biosynthesis via DXP pathway; isopentenyl diphosphate from 1-deoxy-D-xylulose 5-phosphate: step 1/6. In terms of biological role, catalyzes the NADPH-dependent rearrangement and reduction of 1-deoxy-D-xylulose-5-phosphate (DXP) to 2-C-methyl-D-erythritol 4-phosphate (MEP). The protein is 1-deoxy-D-xylulose 5-phosphate reductoisomerase of Geotalea daltonii (strain DSM 22248 / JCM 15807 / FRC-32) (Geobacter daltonii).